The sequence spans 485 residues: Glutamyl-tRNA(Gln) amidotransferase subunit A (485 aa).

Catalysis depends on charge relay system residues Lys79 and Ser154. Catalysis depends on Ser178, which acts as the Acyl-ester intermediate.

This sequence belongs to the amidase family. GatA subfamily. As to quaternary structure, heterotrimer of A, B and C subunits.

It catalyses the reaction L-glutamyl-tRNA(Gln) + L-glutamine + ATP + H2O = L-glutaminyl-tRNA(Gln) + L-glutamate + ADP + phosphate + H(+). Its function is as follows. Allows the formation of correctly charged Gln-tRNA(Gln) through the transamidation of misacylated Glu-tRNA(Gln) in organisms which lack glutaminyl-tRNA synthetase. The reaction takes place in the presence of glutamine and ATP through an activated gamma-phospho-Glu-tRNA(Gln). The sequence is that of Glutamyl-tRNA(Gln) amidotransferase subunit A from Clostridium botulinum (strain ATCC 19397 / Type A).